The sequence spans 90 residues: Small ribosomal subunit protein bS20 (90 aa).

The protein belongs to the bacterial ribosomal protein bS20 family.

Binds directly to 16S ribosomal RNA. The sequence is that of Small ribosomal subunit protein bS20 from Francisella philomiragia subsp. philomiragia (strain ATCC 25017 / CCUG 19701 / FSC 153 / O#319-036).